Consider the following 233-residue polypeptide: Phosphoglycolate phosphatase 2 (233 aa).

The active-site Nucleophile is the D13. Residues D13 and D15 each coordinate Mg(2+). K152 lines the substrate pocket. D174 and D178 together coordinate Mg(2+).

It belongs to the archaeal SPP-like hydrolase family. Mg(2+) is required as a cofactor.

It carries out the reaction 2-phosphoglycolate + H2O = glycolate + phosphate. Functionally, catalyzes the dephosphorylation of 2-phosphoglycolate. This is Phosphoglycolate phosphatase 2 from Saccharolobus solfataricus (strain ATCC 35092 / DSM 1617 / JCM 11322 / P2) (Sulfolobus solfataricus).